The chain runs to 307 residues: MDEATAKSGTEQDGLTPVKPPEAELLVVTGMSGAGRSTASDALEDHGWYVVDNLPPQMLGTLAEIVSHAPKSIPKLAVVVDVRSKDLFTDIQTALGALSASGITFRVLFLDANDDVLVRRFEQGRRPHPLQGGGRILDGIGIEREVLRELREHADVVLDTSEFNVHGLATAITELFSDTGPVTLRLNVMSFGFKYGLPVDANFVADARFIPNPHWVPQLRPHTGLDEDVSDYVLGAEGVQEFVDRYVRALEPVLDGYRQENKHYATLAVGCTGGKHRSVAVAMELSKRLAQYPRVTVTTTHRDLGRE.

The tract at residues 1–21 is disordered; sequence MDEATAKSGTEQDGLTPVKPP. 30–37 provides a ligand contact to ATP; sequence GMSGAGRS. 81 to 84 contributes to the GTP binding site; it reads DVRS.

The protein belongs to the RapZ-like family.

Functionally, displays ATPase and GTPase activities. This is Nucleotide-binding protein AAur_2084 from Paenarthrobacter aurescens (strain TC1).